The following is a 185-amino-acid chain: Large ribosomal subunit protein uL5 (185 aa).

The protein belongs to the universal ribosomal protein uL5 family. Part of the 50S ribosomal subunit; contacts the 5S rRNA and probably tRNA. Forms a bridge to the 30S subunit in the 70S ribosome.

This is one of the proteins that bind and probably mediate the attachment of the 5S RNA into the large ribosomal subunit, where it forms part of the central protuberance. In the 70S ribosome it contacts protein S13 of the 30S subunit (bridge B1b), connecting the 2 subunits; this bridge is implicated in subunit movement. May contact the P site tRNA; the 5S rRNA and some of its associated proteins might help stabilize positioning of ribosome-bound tRNAs. This Haloquadratum walsbyi (strain DSM 16790 / HBSQ001) protein is Large ribosomal subunit protein uL5.